The following is a 208-amino-acid chain: Small ribosomal subunit protein uS4A (208 aa).

Positions 98–159 (SRLDNVAYNM…HAKSYLRIKA (62 aa)) constitute an S4 RNA-binding domain.

Belongs to the universal ribosomal protein uS4 family. As to quaternary structure, part of the 30S ribosomal subunit. Contacts protein S5. The interaction surface between S4 and S5 is involved in control of translational fidelity.

Its function is as follows. One of the primary rRNA binding proteins, it binds directly to 16S rRNA where it nucleates assembly of the body of the 30S subunit. Functionally, with S5 and S12 plays an important role in translational accuracy. In Nitrosomonas europaea (strain ATCC 19718 / CIP 103999 / KCTC 2705 / NBRC 14298), this protein is Small ribosomal subunit protein uS4A (rpsD1).